The primary structure comprises 201 residues: Protein lin-7 homolog B (201 aa).

The short motif at 1 to 13 is the Kinase interacting site element; it reads MAALVEPLGLERE. The L27 domain maps to 10-65; the sequence is LEREVSRAVELLERLQRSGELPPQKLQALQRVLQSRFCSAIREVYEQLYDTLDITG. Residues 93-175 form the PDZ domain; it reads VVELPKTDEG…SVKLVVRYTP (83 aa).

The protein belongs to the lin-7 family. Forms a complex with CASK and CASKIN1. Component of the brain-specific heterotrimeric complex (LIN-10-LIN-2-LIN-7 complex) composed of at least APBA1, CASK, and LIN7, which associates with the motor protein KIF17 to transport vesicles along microtubules. Forms a heterotrimeric complex composed of MMP5, LIN7B and PATJ; the N-terminal L27 domain of PALS1 interacts with the L27 domain of PATJ and the C-terminal L27 domain of PALS1 interacts with the L27 domain of LIN7B. Forms a heterotrimeric complex with DLG1 and CASK via their L27 domains. Interacts with DLG4 and GRIN2B as well as CDH1 and CTNNB1, the channels KCNJ12/Kir2.2, KCNJ4/Kir2.3 and probably KCNJ2/Kir2.1 and SLC6A12/BGT-1 via its PDZ domain. The association of LIN7A with cadherin and beta-catenin is calcium-dependent, occurs at synaptic junctions and requires the actin cytoskeleton. Interacts with EGFR, ERBB2, ERBB3 and ERBB4 with both PDZ and KID domains. Interacts with ASIC3. Interacts with TOPK. Interacts with RTKN. Associates with KIF17 via APBA1. Interacts with APBA1. Interacts with MPP7. Interacts with DLG2. Interacts with DLG3.

It localises to the cell membrane. The protein resides in the basolateral cell membrane. The protein localises to the cell junction. It is found in the postsynaptic density membrane. Its subcellular location is the tight junction. Plays a role in establishing and maintaining the asymmetric distribution of channels and receptors at the plasma membrane of polarized cells. Forms membrane-associated multiprotein complexes that may regulate delivery and recycling of proteins to the correct membrane domains. The tripartite complex composed of LIN7 (LIN7A, LIN7B or LIN7C), CASK and APBA1 associates with the motor protein KIF17 to transport vesicles containing N-methyl-D-aspartate (NMDA) receptor subunit NR2B along microtubules. This complex may have the potential to couple synaptic vesicle exocytosis to cell adhesion in brain. Ensures the proper localization of GRIN2B (subunit 2B of the NMDA receptor) to neuronal postsynaptic density and may function in localizing synaptic vesicles at synapses where it is recruited by beta-catenin and cadherin. Required to localize Kir2 channels, GABA transporter (SLC6A12) and EGFR/ERBB1, ERBB2, ERBB3 and ERBB4 to the basolateral membrane of epithelial cells. May increase the amplitude of ASIC3 acid-evoked currents by stabilizing the channel at the cell surface. The chain is Protein lin-7 homolog B (LIN7B) from Bos taurus (Bovine).